We begin with the raw amino-acid sequence, 201 residues long: Probable chemoreceptor glutamine deamidase CheD 1 (201 aa).

Belongs to the CheD family.

The catalysed reaction is L-glutaminyl-[protein] + H2O = L-glutamyl-[protein] + NH4(+). In terms of biological role, probably deamidates glutamine residues to glutamate on methyl-accepting chemotaxis receptors (MCPs), playing an important role in chemotaxis. The protein is Probable chemoreceptor glutamine deamidase CheD 1 of Geobacter sulfurreducens (strain ATCC 51573 / DSM 12127 / PCA).